A 385-amino-acid polypeptide reads, in one-letter code: DNA replication and repair protein RecF (385 aa).

30–37 (GSNGFGKT) contributes to the ATP binding site.

This sequence belongs to the RecF family.

It is found in the cytoplasm. In terms of biological role, the RecF protein is involved in DNA metabolism; it is required for DNA replication and normal SOS inducibility. RecF binds preferentially to single-stranded, linear DNA. It also seems to bind ATP. The protein is DNA replication and repair protein RecF of Mycobacterium avium (strain 104).